The chain runs to 485 residues: Pyruvate kinase (485 aa).

Arg-33 lines the substrate pocket. Residues Asn-35, Ser-37, Asp-67, and Thr-68 each contribute to the K(+) site. 35–38 is a binding site for ATP; the sequence is NFSH. Positions 74 and 155 each coordinate ATP. Glu-221 is a Mg(2+) binding site. 3 residues coordinate substrate: Gly-244, Asp-245, and Thr-277. Asp-245 provides a ligand contact to Mg(2+).

The protein belongs to the pyruvate kinase family. In terms of assembly, homotetramer. The cofactor is Mg(2+). Requires K(+) as cofactor.

It catalyses the reaction pyruvate + ATP = phosphoenolpyruvate + ADP + H(+). It functions in the pathway carbohydrate degradation; glycolysis; pyruvate from D-glyceraldehyde 3-phosphate: step 5/5. This Chlamydia trachomatis serovar D (strain ATCC VR-885 / DSM 19411 / UW-3/Cx) protein is Pyruvate kinase (pyk).